The chain runs to 187 residues: MRNGKILCCHCFYNKGDHEDDEGGRSIESLCAVNLAEGLNPRTNGPGKDSFSFSTSGSKPSSSLSFPVTSSMVSSTSSYSSFLFLLVVNHLFSGRLRCGSPEFIIRSFTITLGPLNHNISPFVFFHGNISSLPDLLVWLCRSVRCKTSTFLVIEIGKTNEEAASIIILPKLPLDACDVKSSIIVGIL.

Residues 42–63 (RTNGPGKDSFSFSTSGSKPSSS) are disordered. Over residues 50–63 (SFSFSTSGSKPSSS) the composition is skewed to low complexity.

This is an uncharacterized protein from Saccharomyces cerevisiae (strain ATCC 204508 / S288c) (Baker's yeast).